Reading from the N-terminus, the 144-residue chain is uncharacterized protein (144 aa).

This is an uncharacterized protein from Escherichia coli O157:H7.